A 107-amino-acid chain; its full sequence is U1-lycotoxin-Ls1x (107 aa).

An N-terminal signal peptide occupies residues M1–S20. The propeptide occupies E21–R41. Disulfide bonds link C44–C59, C51–C68, C58–C86, and C70–C84.

The protein belongs to the neurotoxin 19 (CSTX) family. 04 (U1-Lctx) subfamily. In terms of tissue distribution, expressed by the venom gland.

It localises to the secreted. This Lycosa singoriensis (Wolf spider) protein is U1-lycotoxin-Ls1x.